The following is a 335-amino-acid chain: tRNA N6-adenosine threonylcarbamoyltransferase (335 aa).

Histidine 111, histidine 115, and tyrosine 132 together coordinate Fe cation. Substrate is bound by residues 132-136 (YVSGG), aspartate 164, glycine 177, glutamate 181, and asparagine 260. Aspartate 288 contributes to the Fe cation binding site.

It belongs to the KAE1 / TsaD family. In terms of assembly, monomer. Component of the KEOPS complex that consists of Kae1, Bud32, Cgi121 and Pcc1; the whole complex dimerizes. Fe(2+) serves as cofactor.

It localises to the cytoplasm. It catalyses the reaction L-threonylcarbamoyladenylate + adenosine(37) in tRNA = N(6)-L-threonylcarbamoyladenosine(37) in tRNA + AMP + H(+). Functionally, required for the formation of a threonylcarbamoyl group on adenosine at position 37 (t(6)A37) in tRNAs that read codons beginning with adenine. Is a component of the KEOPS complex that is probably involved in the transfer of the threonylcarbamoyl moiety of threonylcarbamoyl-AMP (TC-AMP) to the N6 group of A37. Kae1 likely plays a direct catalytic role in this reaction, but requires other protein(s) of the complex to fulfill this activity. This chain is tRNA N6-adenosine threonylcarbamoyltransferase, found in Methanococcoides burtonii (strain DSM 6242 / NBRC 107633 / OCM 468 / ACE-M).